The sequence spans 121 residues: Parathyroid hormone-related protein (121 aa).

Residues Val-1–Gly-14 form the signal peptide. Positions Arg-15–Leu-24 are excised as a propeptide. Residues Arg-47–His-58 are important for receptor binding. The tract at residues Glu-61 to Gly-121 is disordered. Over residues Ser-66–Asn-80 the composition is skewed to polar residues. The Nuclear localization signal signature appears at Thr-98–Lys-119. Positions Asn-99–Pro-108 are enriched in basic and acidic residues. Residues Pro-112–Gly-121 show a composition bias toward basic residues.

This sequence belongs to the parathyroid hormone family. In terms of assembly, PTHrP interacts with PTH1R (via N-terminal extracellular domain).

Its subcellular location is the secreted. It is found in the cytoplasm. It localises to the nucleus. Neuroendocrine peptide which is a critical regulator of cellular and organ growth, development, migration, differentiation and survival and of epithelial calcium ion transport. Acts by binding to its receptor, PTH1R, activating G protein-coupled receptor signaling. Regulates endochondral bone development and epithelial-mesenchymal interactions during the formation of the mammary glands and teeth. Required for skeletal homeostasis. Promotes mammary mesenchyme differentiation and bud outgrowth by modulating mesenchymal cell responsiveness to BMPs. Up-regulates BMPR1A expression in the mammary mesenchyme and this increases the sensitivity of these cells to BMPs and allows them to respond to BMP4 in a paracrine and/or autocrine fashion. BMP4 signaling in the mesenchyme, in turn, triggers epithelial outgrowth and augments MSX2 expression, which causes the mammary mesenchyme to inhibit hair follicle formation within the nipple sheath. This Ovis aries (Sheep) protein is Parathyroid hormone-related protein (PTHLH).